The primary structure comprises 623 residues: MPAVYGDRMTTFEDSEKESEYGYIRKVSGPVVVADGMNGAAMYELVRVGHDNLIGEIIRLEGDSATIQVYEETGGLTVNDPVLRTHKPLSVELGPGILGNIFDGIQRPLKTIAKRSGDVYIPRGVSVPPLDKDTQWDFQPKKLGVGDLLTGGDLYAIVDENSLMQHHVVLPPDAMGKITYIAPAGNYTIQDTVLELEFQGVVKKFTMLQTWPVRTPRPVASKLAADTPLLTGQRVLDALFPSVLGGTCAILGAFGCGKTVISQALSKYSNSDAVVYVGCGERGNEMAEVLMDFPQLTMTLPDGREESVMKRTTLVANTSNMPVAAREASIYTGITIAEYFRDMGYNVSMMADSGSRWAEALREISGRLAEMPADSGYPAYLAARLASFYEAAGKVKCLGGPERNGSVTIVGAVSPPGGDFSDPVTSATLSIVQVFWGLDKKLAQRKHFPSVNWLISYSKYSGALESFYEKFDSEFIDIRTKAREVLQREDDLNEIVQLVGKDALAETDKITLDTAKLLREDYLAQNAFTAYDKFCPFYKSVWMMRNIIHFYNLANQAVERGAGSDGQKITYSLIKLRLGDLFYRLVSQKFEDPAEGEDALVAKFKKLNEDLTAAFRNLEDETR.

252 to 259 contacts ATP; it reads GAFGCGKT.

It belongs to the ATPase alpha/beta chains family. V-ATPase is a heteromultimeric enzyme composed of a peripheral catalytic V1 complex (main components: subunits A, B, C, D, E, and F) attached to an integral membrane V0 proton pore complex (main component: the proteolipid protein).

The enzyme catalyses ATP + H2O + 4 H(+)(in) = ADP + phosphate + 5 H(+)(out). In terms of biological role, catalytic subunit of the peripheral V1 complex of vacuolar ATPase. V-ATPase vacuolar ATPase is responsible for acidifying a variety of intracellular compartments in eukaryotic cells. The polypeptide is V-type proton ATPase catalytic subunit A (Beta vulgaris (Sugar beet)).